We begin with the raw amino-acid sequence, 714 residues long: Fatty acid oxidation complex subunit alpha (714 aa).

An enoyl-CoA hydratase region spans residues 1 to 190 (MEMASAFTLN…KLGLVDDVVP (190 aa)). Residues 306 to 714 (APLNSVGILG…FWKTTATDLQ (409 aa)) form a 3-hydroxyacyl-CoA dehydrogenase region.

The protein in the N-terminal section; belongs to the enoyl-CoA hydratase/isomerase family. This sequence in the central section; belongs to the 3-hydroxyacyl-CoA dehydrogenase family. Heterotetramer of two alpha chains (FadJ) and two beta chains (FadI).

It is found in the cytoplasm. The catalysed reaction is a (3S)-3-hydroxyacyl-CoA = a (2E)-enoyl-CoA + H2O. It catalyses the reaction a 4-saturated-(3S)-3-hydroxyacyl-CoA = a (3E)-enoyl-CoA + H2O. It carries out the reaction a (3S)-3-hydroxyacyl-CoA + NAD(+) = a 3-oxoacyl-CoA + NADH + H(+). The enzyme catalyses (3S)-3-hydroxybutanoyl-CoA = (3R)-3-hydroxybutanoyl-CoA. It functions in the pathway lipid metabolism; fatty acid beta-oxidation. Catalyzes the formation of a hydroxyacyl-CoA by addition of water on enoyl-CoA. Also exhibits 3-hydroxyacyl-CoA epimerase and 3-hydroxyacyl-CoA dehydrogenase activities. This Escherichia coli O9:H4 (strain HS) protein is Fatty acid oxidation complex subunit alpha.